We begin with the raw amino-acid sequence, 121 residues long: Ribulose bisphosphate carboxylase small subunit (121 aa).

It belongs to the RuBisCO small chain family. Heterohexadecamer of 8 large and 8 small subunits.

Its function is as follows. RuBisCO catalyzes two reactions: the carboxylation of D-ribulose 1,5-bisphosphate, the primary event in carbon dioxide fixation, as well as the oxidative fragmentation of the pentose substrate. Both reactions occur simultaneously and in competition at the same active site. Although the small subunit is not catalytic it is essential for maximal activity. This chain is Ribulose bisphosphate carboxylase small subunit, found in Alvinoconcha hessleri symbiotic bacterium.